The following is a 235-amino-acid chain: Hydroxyacylglutathione hydrolase (235 aa).

Positions 53, 55, 57, 58, 109, 127, and 165 each coordinate Zn(2+).

It belongs to the metallo-beta-lactamase superfamily. Glyoxalase II family. In terms of assembly, monomer. The cofactor is Zn(2+).

It catalyses the reaction an S-(2-hydroxyacyl)glutathione + H2O = a 2-hydroxy carboxylate + glutathione + H(+). The protein operates within secondary metabolite metabolism; methylglyoxal degradation; (R)-lactate from methylglyoxal: step 2/2. Its function is as follows. Thiolesterase that catalyzes the hydrolysis of S-D-lactoyl-glutathione to form glutathione and D-lactic acid. In Actinobacillus pleuropneumoniae serotype 7 (strain AP76), this protein is Hydroxyacylglutathione hydrolase.